Reading from the N-terminus, the 327-residue chain is uncharacterized protein (327 aa).

The 73-residue stretch at 12–84 folds into the S4 RNA-binding domain; it reads MRIDRYLTQQ…IPITILYEDD (73 aa). Aspartate 137 is an active-site residue.

Belongs to the pseudouridine synthase RluA family.

It carries out the reaction a uridine in RNA = a pseudouridine in RNA. This is an uncharacterized protein from Chlorobaculum parvum (strain DSM 263 / NCIMB 8327) (Chlorobium vibrioforme subsp. thiosulfatophilum).